The following is a 43-amino-acid chain: Protein PsbN (43 aa).

The helical transmembrane segment at 5 to 27 threads the bilayer; that stretch reads TLIAIFISCSLVSFTGYALYTAF.

Belongs to the PsbN family.

It is found in the plastid. The protein localises to the chloroplast thylakoid membrane. In terms of biological role, may play a role in photosystem I and II biogenesis. This chain is Protein PsbN, found in Lopidium concinnum (Moss).